The primary structure comprises 328 residues: Probable cell division protein WhiA (328 aa).

A DNA-binding region (H-T-H motif) is located at residues 275 to 308 (SLEELGQLHDPVLTKDAIAGRIRRLLAMADKRAE).

This sequence belongs to the WhiA family.

Functionally, involved in cell division and chromosome segregation. The polypeptide is Probable cell division protein WhiA (Nocardioides sp. (strain ATCC BAA-499 / JS614)).